Reading from the N-terminus, the 199-residue chain is V-type ATP synthase subunit E (199 aa).

Belongs to the V-ATPase E subunit family.

In terms of biological role, produces ATP from ADP in the presence of a proton gradient across the membrane. This chain is V-type ATP synthase subunit E, found in Clostridium botulinum (strain Hall / ATCC 3502 / NCTC 13319 / Type A).